We begin with the raw amino-acid sequence, 431 residues long: Peptidase B (431 aa).

2 residues coordinate Mn(2+): Lys196 and Asp201. Lys208 is a catalytic residue. Asp219, Asp278, and Glu280 together coordinate Mn(2+). Arg282 is a catalytic residue.

Belongs to the peptidase M17 family. In terms of assembly, homohexamer. It depends on Mn(2+) as a cofactor.

It is found in the cytoplasm. The enzyme catalyses Release of an N-terminal amino acid, Xaa, from a peptide or arylamide. Xaa is preferably Glu or Asp but may be other amino acids, including Leu, Met, His, Cys and Gln.. Its function is as follows. Probably plays an important role in intracellular peptide degradation. In Vibrio atlanticus (strain LGP32) (Vibrio splendidus (strain Mel32)), this protein is Peptidase B.